The chain runs to 407 residues: Na(+)-translocating NADH-quinone reductase subunit F (407 aa).

Residues 6-26 (IFLAIGMFTAIVLGLVAIILV) traverse the membrane as a helical segment. Residues 35 to 127 (GDVTIQINGE…DMQIRVPEEV (93 aa)) form the 2Fe-2S ferredoxin-type domain. [2Fe-2S] cluster-binding residues include Cys70, Cys76, Cys79, and Cys111. The region spanning 130–269 (VKKWECTVES…YGPFGEFFAK (140 aa)) is the FAD-binding FR-type domain.

The protein belongs to the NqrF family. In terms of assembly, composed of six subunits; NqrA, NqrB, NqrC, NqrD, NqrE and NqrF. [2Fe-2S] cluster is required as a cofactor. FAD serves as cofactor.

Its subcellular location is the cell inner membrane. It carries out the reaction a ubiquinone + n Na(+)(in) + NADH + H(+) = a ubiquinol + n Na(+)(out) + NAD(+). Its function is as follows. NQR complex catalyzes the reduction of ubiquinone-1 to ubiquinol by two successive reactions, coupled with the transport of Na(+) ions from the cytoplasm to the periplasm. The first step is catalyzed by NqrF, which accepts electrons from NADH and reduces ubiquinone-1 to ubisemiquinone by a one-electron transfer pathway. The polypeptide is Na(+)-translocating NADH-quinone reductase subunit F (Pseudomonas paraeruginosa (strain DSM 24068 / PA7) (Pseudomonas aeruginosa (strain PA7))).